Reading from the N-terminus, the 314-residue chain is MLGSSGRRLLTTVLQAQRWPFQPSRDMRLVQFQAPHLAGPHLGLESGNGGGVIDLNAFEPTLPKTMVEFLEQGEATLSVVRRALATQLPVLPRSEVTFLAPVTRPDKVVCVGMNYADHCREQNVPVPKEPIIFSKFASAIVGPYDNIILPPESQEVDWEVELAVVIGKRGKYIKATDAMAHVAGFTVAHDVSARDWQMGRNGKQWLLGKTFDTFCPLGPALVTKDSVADPHNLKICCRVNGELMQSSNTNQMVFKTEELITWVSQFVTLYPGDIILTGTPPGVGVFRKPPVFLKKGDEVQCEIEELGVIINKVV.

The N-terminal 84 residues, 1 to 84 (MLGSSGRRLL…ATLSVVRRAL (84 aa)), are a transit peptide targeting the mitochondrion. Residues E159, E161, and D190 each contribute to the Mg(2+) site. K203 is subject to N6-acetyllysine; alternate. The residue at position 203 (K203) is an N6-succinyllysine; alternate. An N6-acetyllysine modification is found at K234.

The protein belongs to the FAH family. The cofactor is Mg(2+). Mn(2+) is required as a cofactor.

Its subcellular location is the mitochondrion. The enzyme catalyses oxaloacetate = enol-oxaloacetate. Functionally, tautomerase that converts enol-oxaloacetate, a strong inhibitor of succinate dehydrogenase, to the physiological keto form of oxaloacetate. It is thereby required to maximize aerobic respiration efficiency by preventing succinate dehydrogenase inhibition. In Bos taurus (Bovine), this protein is Oxaloacetate tautomerase FAHD2B, mitochondrial.